The sequence spans 225 residues: NAD(P)H-quinone oxidoreductase subunit K, chloroplastic (225 aa).

[4Fe-4S] cluster contacts are provided by Cys-43, Cys-44, Cys-108, and Cys-139.

The protein belongs to the complex I 20 kDa subunit family. In terms of assembly, NDH is composed of at least 16 different subunits, 5 of which are encoded in the nucleus. [4Fe-4S] cluster serves as cofactor.

Its subcellular location is the plastid. The protein localises to the chloroplast thylakoid membrane. It catalyses the reaction a plastoquinone + NADH + (n+1) H(+)(in) = a plastoquinol + NAD(+) + n H(+)(out). It carries out the reaction a plastoquinone + NADPH + (n+1) H(+)(in) = a plastoquinol + NADP(+) + n H(+)(out). In terms of biological role, NDH shuttles electrons from NAD(P)H:plastoquinone, via FMN and iron-sulfur (Fe-S) centers, to quinones in the photosynthetic chain and possibly in a chloroplast respiratory chain. The immediate electron acceptor for the enzyme in this species is believed to be plastoquinone. Couples the redox reaction to proton translocation, and thus conserves the redox energy in a proton gradient. The polypeptide is NAD(P)H-quinone oxidoreductase subunit K, chloroplastic (Agrostis stolonifera (Creeping bentgrass)).